The chain runs to 380 residues: Transmembrane protein 229A (380 aa).

The segment at 1 to 40 (MAGSDVDSEGPARRGGAARRPGAPGGPGSEAAAGCPEPLS) is disordered. 2 consecutive transmembrane segments (helical) span residues 51–71 (LPAW…DVLV) and 117–137 (AFVF…TLAG). Residues 188-236 (RQQQQQQQQQQQQRRGALPVPPGARVPTAAGARRRRPRGPRGAGGAPSQ) form a disordered region. The span at 190-202 (QQQQQQQQQQQRR) shows a compositional bias: low complexity. Transmembrane regions (helical) follow at residues 244 to 264 (FLFF…FFNV), 278 to 298 (LWSF…YFHL), 310 to 330 (VPIY…GLRT), and 343 to 363 (LNFM…LSVY).

This sequence belongs to the TMEM229 family.

It is found in the membrane. The polypeptide is Transmembrane protein 229A (TMEM229A) (Homo sapiens (Human)).